A 359-amino-acid chain; its full sequence is 3-dehydroquinate synthase (359 aa).

Residues Asp-71–Lys-76, Gly-105–Asp-109, Thr-129–Thr-130, Lys-142, Lys-151, and Cys-169–Thr-172 each bind NAD(+). Zn(2+)-binding residues include Glu-184, His-247, and His-264.

This sequence belongs to the sugar phosphate cyclases superfamily. Dehydroquinate synthase family. Co(2+) is required as a cofactor. It depends on Zn(2+) as a cofactor. NAD(+) serves as cofactor.

The protein resides in the cytoplasm. The enzyme catalyses 7-phospho-2-dehydro-3-deoxy-D-arabino-heptonate = 3-dehydroquinate + phosphate. It participates in metabolic intermediate biosynthesis; chorismate biosynthesis; chorismate from D-erythrose 4-phosphate and phosphoenolpyruvate: step 2/7. In terms of biological role, catalyzes the conversion of 3-deoxy-D-arabino-heptulosonate 7-phosphate (DAHP) to dehydroquinate (DHQ). In Shewanella sp. (strain W3-18-1), this protein is 3-dehydroquinate synthase.